We begin with the raw amino-acid sequence, 161 residues long: Transcriptional repressor NrdR (161 aa).

Residues 3-34 (CPSCQHTDSRVLESRAADSGKSVRRRRECLNC) fold into a zinc finger. In terms of domain architecture, ATP-cone spans 49–139 (ITVVKRSGTR…VYGKFSGISD (91 aa)).

It belongs to the NrdR family. Requires Zn(2+) as cofactor.

Negatively regulates transcription of bacterial ribonucleotide reductase nrd genes and operons by binding to NrdR-boxes. This chain is Transcriptional repressor NrdR, found in Synechococcus sp. (strain RCC307).